The chain runs to 387 residues: Phosphoglycerate kinase (387 aa).

Residues 21–23, arginine 36, 59–62, arginine 113, and arginine 146 each bind substrate; these read DLN and HLGR. ATP contacts are provided by residues lysine 197, glutamate 314, and 340–343; that span reads GGDT.

It belongs to the phosphoglycerate kinase family. In terms of assembly, monomer.

The protein localises to the cytoplasm. It catalyses the reaction (2R)-3-phosphoglycerate + ATP = (2R)-3-phospho-glyceroyl phosphate + ADP. It participates in carbohydrate degradation; glycolysis; pyruvate from D-glyceraldehyde 3-phosphate: step 2/5. This is Phosphoglycerate kinase from Pseudomonas entomophila (strain L48).